The chain runs to 71 residues: Disintegrin tzabcanin (71 aa).

One can recognise a Disintegrin domain in the interval 1–71 (GEECDCGSPA…ADCPRNHFHA (71 aa)). Intrachain disulfides connect Cys4-Cys19, Cys6-Cys14, Cys13-Cys36, Cys27-Cys33, Cys32-Cys57, and Cys45-Cys64. Positions 49–51 (RGD) match the Cell attachment site motif.

Belongs to the venom metalloproteinase (M12B) family. P-II subfamily. P-IIa sub-subfamily. In terms of tissue distribution, expressed by the venom gland.

The protein localises to the secreted. Functionally, inhibits fibrinogen interaction with platelets. Acts by binding to alpha-IIb/beta-3 (ITGA2B/ITGB3) on the platelet surface and inhibits aggregation induced by ADP, thrombin, platelet-activating factor and collagen. Inhibits cell adhesion to vitronectin, probably by blocking its receptor integrin alpha-V/beta-3 (ITGAV/ITGB3), and to fibronectin in vitro. Shows little to no cytotoxicity in vitro. In Crotalus tzabcan (Yucatan neotropical rattlesnake), this protein is Disintegrin tzabcanin.